The chain runs to 280 residues: 4-diphosphocytidyl-2-C-methyl-D-erythritol kinase (280 aa).

The active site involves lysine 8. 91–101 (PVAAGLAGGSS) contributes to the ATP binding site. Aspartate 133 is an active-site residue.

This sequence belongs to the GHMP kinase family. IspE subfamily.

The enzyme catalyses 4-CDP-2-C-methyl-D-erythritol + ATP = 4-CDP-2-C-methyl-D-erythritol 2-phosphate + ADP + H(+). Its pathway is isoprenoid biosynthesis; isopentenyl diphosphate biosynthesis via DXP pathway; isopentenyl diphosphate from 1-deoxy-D-xylulose 5-phosphate: step 3/6. Catalyzes the phosphorylation of the position 2 hydroxy group of 4-diphosphocytidyl-2C-methyl-D-erythritol. The protein is 4-diphosphocytidyl-2-C-methyl-D-erythritol kinase of Clostridium kluyveri (strain NBRC 12016).